The primary structure comprises 759 residues: LPS-assembly protein LptD (759 aa).

Positions 1-45 (MKPLKLELNPRDFNHYQAAFLPYRMKIKQPLHVLCFSVCSLSAVA) are cleaved as a signal peptide.

The protein belongs to the LptD family. As to quaternary structure, component of the lipopolysaccharide transport and assembly complex. Interacts with LptE and LptA.

The protein localises to the cell outer membrane. Together with LptE, is involved in the assembly of lipopolysaccharide (LPS) at the surface of the outer membrane. This chain is LPS-assembly protein LptD, found in Pseudoalteromonas atlantica (strain T6c / ATCC BAA-1087).